Consider the following 112-residue polypeptide: FK506-binding protein 1A (112 aa).

The 89-residue stretch at 20 to 108 (GDFVTIHYTG…IFEVELLGIN (89 aa)) folds into the PPIase FKBP-type domain.

The protein belongs to the FKBP-type PPIase family. FKBP1 subfamily.

It localises to the cytoplasm. It catalyses the reaction [protein]-peptidylproline (omega=180) = [protein]-peptidylproline (omega=0). Its activity is regulated as follows. Inhibited by both FK506 and rapamycin. Functionally, PPIases accelerate the folding of proteins. It catalyzes the cis-trans isomerization of proline imidic peptide bonds in oligopeptides. The protein is FK506-binding protein 1A (fpr1A) of Aspergillus fumigatus (strain ATCC MYA-4609 / CBS 101355 / FGSC A1100 / Af293) (Neosartorya fumigata).